The primary structure comprises 634 residues: 1-deoxy-D-xylulose-5-phosphate synthase (634 aa).

Thiamine diphosphate is bound by residues His74 and 115–117; that span reads AHS. Asp146 lines the Mg(2+) pocket. Residues 147–148, Asn176, Tyr283, and Glu365 each bind thiamine diphosphate; that span reads GA. Asn176 is a Mg(2+) binding site.

The protein belongs to the transketolase family. DXPS subfamily. Homodimer. Mg(2+) is required as a cofactor. Thiamine diphosphate serves as cofactor.

It carries out the reaction D-glyceraldehyde 3-phosphate + pyruvate + H(+) = 1-deoxy-D-xylulose 5-phosphate + CO2. The protein operates within metabolic intermediate biosynthesis; 1-deoxy-D-xylulose 5-phosphate biosynthesis; 1-deoxy-D-xylulose 5-phosphate from D-glyceraldehyde 3-phosphate and pyruvate: step 1/1. In terms of biological role, catalyzes the acyloin condensation reaction between C atoms 2 and 3 of pyruvate and glyceraldehyde 3-phosphate to yield 1-deoxy-D-xylulose-5-phosphate (DXP). This is 1-deoxy-D-xylulose-5-phosphate synthase from Burkholderia mallei (strain ATCC 23344).